Here is a 181-residue protein sequence, read N- to C-terminus: Large ribosomal subunit protein uL5 (181 aa).

Belongs to the universal ribosomal protein uL5 family. As to quaternary structure, part of the 50S ribosomal subunit; part of the 5S rRNA/L5/L18/L25 subcomplex. Contacts the 5S rRNA and the P site tRNA. Forms a bridge to the 30S subunit in the 70S ribosome.

Functionally, this is one of the proteins that bind and probably mediate the attachment of the 5S RNA into the large ribosomal subunit, where it forms part of the central protuberance. In the 70S ribosome it contacts protein S13 of the 30S subunit (bridge B1b), connecting the 2 subunits; this bridge is implicated in subunit movement. Contacts the P site tRNA; the 5S rRNA and some of its associated proteins might help stabilize positioning of ribosome-bound tRNAs. This is Large ribosomal subunit protein uL5 from Thermosipho africanus (strain TCF52B).